A 389-amino-acid polypeptide reads, in one-letter code: 1-deoxy-D-xylulose 5-phosphate reductoisomerase (389 aa).

Residues Ser11, Gly12, Ser13, Val14, Asn39, and Asn122 each coordinate NADPH. Lys123 is a 1-deoxy-D-xylulose 5-phosphate binding site. Glu124 contributes to the NADPH binding site. Asp148 contributes to the Mn(2+) binding site. 4 residues coordinate 1-deoxy-D-xylulose 5-phosphate: Ser149, Glu150, Ser174, and His197. Residue Glu150 coordinates Mn(2+). NADPH is bound at residue Gly203. Positions 210, 215, 216, and 219 each coordinate 1-deoxy-D-xylulose 5-phosphate. Position 219 (Glu219) interacts with Mn(2+).

This sequence belongs to the DXR family. Mg(2+) is required as a cofactor. Requires Mn(2+) as cofactor.

It carries out the reaction 2-C-methyl-D-erythritol 4-phosphate + NADP(+) = 1-deoxy-D-xylulose 5-phosphate + NADPH + H(+). It functions in the pathway isoprenoid biosynthesis; isopentenyl diphosphate biosynthesis via DXP pathway; isopentenyl diphosphate from 1-deoxy-D-xylulose 5-phosphate: step 1/6. Catalyzes the NADPH-dependent rearrangement and reduction of 1-deoxy-D-xylulose-5-phosphate (DXP) to 2-C-methyl-D-erythritol 4-phosphate (MEP). This is 1-deoxy-D-xylulose 5-phosphate reductoisomerase from Leptospira borgpetersenii serovar Hardjo-bovis (strain JB197).